Reading from the N-terminus, the 314-residue chain is Olfactory receptor 10A6 (314 aa).

Over M1–G25 the chain is Extracellular. N-linked (GlcNAc...) asparagine glycosylation is present at N5. Residues Q26–I46 traverse the membrane as a helical segment. Topologically, residues V47 to S54 are cytoplasmic. Residues L55 to A75 form a helical membrane-spanning segment. Over V76–A99 the chain is Extracellular. C97 and C189 are joined by a disulfide. A helical membrane pass occupies residues Q100–Y120. At D121–G139 the chain is on the cytoplasmic side. The chain crosses the membrane as a helical span at residues V140–T160. Residues S161 to I197 lie on the Extracellular side of the membrane. The helical transmembrane segment at Y198–S217 threads the bilayer. At Y218–A237 the chain is on the cytoplasmic side. The chain crosses the membrane as a helical span at residues F238–T258. The Extracellular portion of the chain corresponds to Y259–K271. A helical transmembrane segment spans residues K272–L292. The Cytoplasmic segment spans residues R293–I314.

The protein belongs to the G-protein coupled receptor 1 family.

It is found in the cell membrane. Functionally, odorant receptor. This Homo sapiens (Human) protein is Olfactory receptor 10A6 (OR10A6).